Reading from the N-terminus, the 125-residue chain is Large ribosomal subunit protein uL22c (125 aa).

It belongs to the universal ribosomal protein uL22 family. In terms of assembly, part of the 50S ribosomal subunit.

Its subcellular location is the plastid. It is found in the chloroplast. Functionally, this protein binds specifically to 23S rRNA. In terms of biological role, the globular domain of the protein is located near the polypeptide exit tunnel on the outside of the subunit, while an extended beta-hairpin is found that lines the wall of the exit tunnel in the center of the 70S ribosome. The sequence is that of Large ribosomal subunit protein uL22c (rpl22) from Nuphar advena (Common spatterdock).